We begin with the raw amino-acid sequence, 465 residues long: RuvB-like helicase 2 (465 aa).

An ATP-binding site is contributed by 73–80; that stretch reads GEPSTGKT.

It belongs to the RuvB family. In terms of assembly, forms homohexameric rings. May form a dodecamer with pont made of two stacked hexameric rings. Component of the chromatin remodeling Ino80 complex.

The protein resides in the nucleus. It catalyses the reaction ATP + H2O = ADP + phosphate + H(+). Acts as a transcriptional coactivator in Wg signaling. Its function is as follows. Proposed core component of the chromatin remodeling Ino80 complex which is involved in transcriptional regulation, DNA replication and probably DNA repair. The sequence is that of RuvB-like helicase 2 from Aedes aegypti (Yellowfever mosquito).